The following is a 227-amino-acid chain: UPF0758 protein Psyc_1834 (227 aa).

Positions 102 to 224 (GLGRSQMVKD…TLSYAENCLA (123 aa)) constitute an MPN domain. Positions 173, 175, and 186 each coordinate Zn(2+). The JAMM motif motif lies at 173–186 (HNHPHTDATPSTAD).

It belongs to the UPF0758 family.

In Psychrobacter arcticus (strain DSM 17307 / VKM B-2377 / 273-4), this protein is UPF0758 protein Psyc_1834.